The primary structure comprises 405 residues: CLIP domain-containing serine protease B8 (405 aa).

The first 24 residues, 1–24, serve as a signal peptide directing secretion; that stretch reads MSSAVLLLLVCGCALAVLSPVAYG. Disulfide bonds link C41–C94, C52–C84, and C58–C95. The region spanning 41–95 is the Clip domain; it reads CDIPNEPNPGQCMLPAECVAYGKINDVSSLSSIERFSFIKQIQCNGSDTVPYVCC. N-linked (GlcNAc...) asparagine glycosylation is found at N85 and N108. One can recognise a Peptidase S1 domain in the interval 137–404; the sequence is IRGGQLAEID…YLPWIKMYTG (268 aa). A disulfide bridge links C167 with C183. Active-site charge relay system residues include H182 and D249. Cystine bridges form between C322–C339 and C349–C380. The active-site Charge relay system is S353.

Belongs to the peptidase S1 family. CLIP subfamily. In terms of processing, proteolytic cleavage is necessary for activation. Cleaved and activated by CLIPB4.

The protein resides in the secreted. Serine protease that functions in the melanization-mediated immune response. Preferentially, cleaves substrates with an arginine at the P1 site. May be involved in the activation of the prophenoloxidase cascade upstream of CLIPB9; does not cleave prophenoloxidase. The chain is CLIP domain-containing serine protease B8 from Anopheles gambiae (African malaria mosquito).